Consider the following 126-residue polypeptide: UPF0102 protein MXAN_3551 (126 aa).

This sequence belongs to the UPF0102 family.

The sequence is that of UPF0102 protein MXAN_3551 from Myxococcus xanthus (strain DK1622).